We begin with the raw amino-acid sequence, 372 residues long: NAD(P)H-quinone oxidoreductase subunit 1 (372 aa).

The next 8 membrane-spanning stretches (helical) occupy residues 29 to 49 (WLPFPMLLMIVVATVGVLVTV), 97 to 117 (LLFTLGPVIVAVPVFLSYLVV), 128 to 148 (LGVAIFLWIALSSIQPIGLLM), 176 to 196 (LALAVLAVAMMSNSLSTIDIV), 204 to 224 (ILGWNIWRQPLGFIIFWIAVL), 254 to 274 (FALYYLASYVNLVLSSLLVAV), 308 to 328 (TLGIIMTLLKTYLLVFIAVLL), and 351 to 371 (VALVNLLLTAALKLTFPFAFG).

It belongs to the complex I subunit 1 family. In terms of assembly, NDH-1 is composed of at least 11 different subunits.

It localises to the cellular thylakoid membrane. It catalyses the reaction a plastoquinone + NADH + (n+1) H(+)(in) = a plastoquinol + NAD(+) + n H(+)(out). It carries out the reaction a plastoquinone + NADPH + (n+1) H(+)(in) = a plastoquinol + NADP(+) + n H(+)(out). Its function is as follows. NDH-1 shuttles electrons from an unknown electron donor, via FMN and iron-sulfur (Fe-S) centers, to quinones in the respiratory and/or the photosynthetic chain. The immediate electron acceptor for the enzyme in this species is believed to be plastoquinone. Couples the redox reaction to proton translocation, and thus conserves the redox energy in a proton gradient. The sequence is that of NAD(P)H-quinone oxidoreductase subunit 1 from Trichodesmium erythraeum (strain IMS101).